Here is a 273-residue protein sequence, read N- to C-terminus: NADPH-dependent 7-cyano-7-deazaguanine reductase (273 aa).

A substrate-binding site is contributed by 81–83 (VES). 83–84 (SK) is an NADPH binding site. Residue cysteine 179 is the Thioimide intermediate of the active site. The Proton donor role is filled by aspartate 186. 218–219 (AE) provides a ligand contact to substrate. 247 to 248 (RG) provides a ligand contact to NADPH.

It belongs to the GTP cyclohydrolase I family. QueF type 2 subfamily. In terms of assembly, homodimer.

It localises to the cytoplasm. It catalyses the reaction 7-aminomethyl-7-carbaguanine + 2 NADP(+) = 7-cyano-7-deazaguanine + 2 NADPH + 3 H(+). It participates in tRNA modification; tRNA-queuosine biosynthesis. In terms of biological role, catalyzes the NADPH-dependent reduction of 7-cyano-7-deazaguanine (preQ0) to 7-aminomethyl-7-deazaguanine (preQ1). The protein is NADPH-dependent 7-cyano-7-deazaguanine reductase of Rickettsia akari (strain Hartford).